The primary structure comprises 612 residues: Proton pump-interactor 1 (612 aa).

The disordered stretch occupies residues 1–58 (MGVEVVNSGGFEVAPAPFEGKPEKNGKLDQGKGDDAPINFGSVGELPKNAEENNNKVV). Residues 20 to 35 (GKPEKNGKLDQGKGDD) are compositionally biased toward basic and acidic residues. 2 coiled-coil regions span residues 90-113 (PKIKAKLDLADKELEKLNKARTGV) and 251-314 (LDGV…NSEY). Composition is skewed to basic and acidic residues over residues 374 to 387 (LSRDGRMRNPDEKP), 434 to 446 (EKAKDAVKVKNVA), 459 to 498 (PQKEEKPVDAATAKEMRKQEEIAKAKQAMERKKKLAEKAA), and 505 to 519 (AQKEAEKKEKKEQEK). Residues 374–572 (LSRDGRMRNP…PIRNRTRGRG (199 aa)) are disordered. The stretch at 466-526 (VDAATAKEMR…QEKKAKKKTG (61 aa)) forms a coiled coil. Residues 531 to 545 (TETEEVPEASEEEIE) are compositionally biased toward acidic residues. Residue serine 540 is modified to Phosphoserine. Over residues 549–564 (QEEKPQKEKVFKEKPI) the composition is skewed to basic and acidic residues. The chain crosses the membrane as a helical span at residues 591–611 (VYAAPAALVVLLLLVLGYYYV).

This sequence belongs to the plant Proton pump-interactor protein family. In terms of assembly, interacts with AHA1 via N-terminal region. As to expression, strongly expressed in root and shoot vascular systems, particularly in meristematic and sink tissues. Also present in pollen, stigmas and siliques, but not in developing embryos.

Its subcellular location is the cell membrane. The protein localises to the endoplasmic reticulum membrane. Functionally, promotes AHA1 plasma membrane ATPase activity by binding to a site different from the 14-3-3 binding site. This chain is Proton pump-interactor 1 (PPI1), found in Arabidopsis thaliana (Mouse-ear cress).